Consider the following 418-residue polypeptide: MFDINLIRKDIATTKEKMLNKKVPSNLFDQIFDLDVLVRSLMQQEQNLNAKKNQLSKEIGILAKNKDPKLQQTLDLVNNIKNELQDISLTLSNKQDELNKLLLVIPNMPDDSVPIGNDENDNVEIKKVFKPKKFDFLPLAHWDLAVKNKLIDFDKSTKITGSRFIIYTNFGARLYRALQQFCLDMNVKAGFSEIWAPVIVNQESLIGSGNLPKFADDLFKLENSNYYLSPTAEVQLTNLHRNEILKASDLPLYYTALTPCFRSEAGSAGRDVRGVIRQHQFHKVELVKLCKPEDSFKELESMTRQAESILEALELPYRRIVLCTGDLGFSSAKTYDLEVWLPSYNAYKEISSCSNCTNFQARRAKIRYKETIDATTELVHTLNGSSLAIDRLWAAIVENYQQEDGSINIPKVLKKYIY.

231–233 (TAE) lines the L-serine pocket. 262–264 (RSE) serves as a coordination point for ATP. Glutamate 285 is a binding site for L-serine. 349–352 (EISS) contacts ATP. An L-serine-binding site is contributed by serine 385.

It belongs to the class-II aminoacyl-tRNA synthetase family. Type-1 seryl-tRNA synthetase subfamily. In terms of assembly, homodimer. The tRNA molecule binds across the dimer.

The protein localises to the cytoplasm. It catalyses the reaction tRNA(Ser) + L-serine + ATP = L-seryl-tRNA(Ser) + AMP + diphosphate + H(+). The catalysed reaction is tRNA(Sec) + L-serine + ATP = L-seryl-tRNA(Sec) + AMP + diphosphate + H(+). It participates in aminoacyl-tRNA biosynthesis; selenocysteinyl-tRNA(Sec) biosynthesis; L-seryl-tRNA(Sec) from L-serine and tRNA(Sec): step 1/1. Functionally, catalyzes the attachment of serine to tRNA(Ser). Is also able to aminoacylate tRNA(Sec) with serine, to form the misacylated tRNA L-seryl-tRNA(Sec), which will be further converted into selenocysteinyl-tRNA(Sec). This Ureaplasma parvum serovar 3 (strain ATCC 27815 / 27 / NCTC 11736) protein is Serine--tRNA ligase.